Reading from the N-terminus, the 109-residue chain is Large ribosomal subunit protein uL22 (109 aa).

It belongs to the universal ribosomal protein uL22 family. Part of the 50S ribosomal subunit.

Its function is as follows. This protein binds specifically to 23S rRNA; its binding is stimulated by other ribosomal proteins, e.g. L4, L17, and L20. It is important during the early stages of 50S assembly. It makes multiple contacts with different domains of the 23S rRNA in the assembled 50S subunit and ribosome. Functionally, the globular domain of the protein is located near the polypeptide exit tunnel on the outside of the subunit, while an extended beta-hairpin is found that lines the wall of the exit tunnel in the center of the 70S ribosome. This is Large ribosomal subunit protein uL22 from Blochmanniella pennsylvanica (strain BPEN).